A 107-amino-acid polypeptide reads, in one-letter code: MKNLAGLMKQASQMQAKMGEMQAKLETVEAEGSAGAGMVTVTLNGKGDLRRLHIDPKLADPAETEMLEDLIVAAHNDAKKKIETMAAEEMQKVTGGLNLPAGMKLPF.

It belongs to the YbaB/EbfC family. Homodimer.

Its subcellular location is the cytoplasm. The protein resides in the nucleoid. Its function is as follows. Binds to DNA and alters its conformation. May be involved in regulation of gene expression, nucleoid organization and DNA protection. The chain is Nucleoid-associated protein GbCGDNIH1_0260 from Granulibacter bethesdensis (strain ATCC BAA-1260 / CGDNIH1).